Reading from the N-terminus, the 499-residue chain is Maturase K (499 aa).

This sequence belongs to the intron maturase 2 family. MatK subfamily.

It localises to the plastid. The protein resides in the chloroplast. Its function is as follows. Usually encoded in the trnK tRNA gene intron. Probably assists in splicing its own and other chloroplast group II introns. The sequence is that of Maturase K from Camellia sinensis (Tea plant).